We begin with the raw amino-acid sequence, 458 residues long: Ammonium transporter Rh type B (458 aa).

Residues 1 to 13 lie on the Cytoplasmic side of the membrane; it reads MAGSPSRAAGRRL. Residues 14–34 form a helical membrane-spanning segment; that stretch reads QLPLLCLFLQGATAVLFAVFV. At 35 to 61 the chain is on the extracellular side; sequence RYNHKTDAALWHRSNHSNADNEFYFRY. Asn49 is a glycosylation site (N-linked (GlcNAc...) asparagine). Residues 62–82 form a helical membrane-spanning segment; it reads PSFQDVHAMVFVGFGFLMVFL. Topologically, residues 83–86 are cytoplasmic; sequence QRYG. Residues 87–107 traverse the membrane as a helical segment; that stretch reads FSSVGFTFLLAAFALQWSTLV. At 108 to 124 the chain is on the extracellular side; it reads QGFLHSFHGGHIHVGVE. Residues 125–145 traverse the membrane as a helical segment; that stretch reads SMINADFCAGAVLISFGAVLG. At 146–149 the chain is on the cytoplasmic side; sequence KTGP. The chain crosses the membrane as a helical span at residues 150-170; it reads AQLLLMALLEVVLFGINEFVL. The Extracellular segment spans residues 171 to 178; sequence LHLLGVRD. A helical transmembrane segment spans residues 179-201; sequence AGGSMTIHTFGAYFGLVLSRVLY. Topologically, residues 202–219 are cytoplasmic; that stretch reads RPQLEKSKHRQGSVYHSD. A helical transmembrane segment spans residues 220 to 240; that stretch reads LFAMIGTIFLWIFWPSFNAAL. At 241–251 the chain is on the extracellular side; it reads TALGAGQHRTA. The helical transmembrane segment at 252 to 272 threads the bilayer; that stretch reads LNTYYSLAASTLGTFALSALV. Topologically, residues 273-282 are cytoplasmic; the sequence is GEDGRLDMVH. The helical transmembrane segment at 283–303 threads the bilayer; that stretch reads IQNAALAGGVVVGTSSEMMLT. Position 304 (Pro304) is a topological domain, extracellular. Residues 305–325 form a helical membrane-spanning segment; that stretch reads FGALTAGFLAGTVSTLGYKFF. The Cytoplasmic segment spans residues 326–346; it reads RPILESKFKVQDTCGVHNLHG. The chain crosses the membrane as a helical span at residues 347 to 367; that stretch reads MPGVLGALLGVLVAGLATHEA. At 368-393 the chain is on the extracellular side; that stretch reads YGDGLESVFPLIAEGQRSATSQAMHQ. Residues 394–414 form a helical membrane-spanning segment; that stretch reads LFGLFVTLMFASVGGGLGGLL. At 415–458 the chain is on the cytoplasmic side; the sequence is LKLPFLDSPPDSQCYEDQVHWQVPGEHEDKAQRPLRVEEADTQA. Residues 416 to 424 form an interaction with ANK3 region; it reads KLPFLDSPP. Positions 429–432 match the Basolateral sorting signal motif; it reads YEDQ. A disordered region spans residues 439–458; it reads GEHEDKAQRPLRVEEADTQA.

Belongs to the ammonium transporter (TC 2.A.49) family. Rh subfamily. As to quaternary structure, interacts (via C-terminus) with ANK2 and ANK3; required for targeting to the basolateral membrane. N-glycosylated.

The protein localises to the cell membrane. Its subcellular location is the basolateral cell membrane. The catalysed reaction is NH4(+)(in) = NH4(+)(out). It catalyses the reaction methylamine(out) = methylamine(in). The enzyme catalyses CO2(out) = CO2(in). Ammonium transporter involved in the maintenance of acid-base homeostasis. Transports ammonium and its related derivative methylammonium across the basolateral plasma membrane of epithelial cells likely contributing to renal transepithelial ammonia transport and ammonia metabolism. May transport either NH4(+) or NH3 ammonia species predominantly mediating an electrogenic NH4(+) transport. May act as a CO2 channel providing for renal acid secretion. In Pan troglodytes (Chimpanzee), this protein is Ammonium transporter Rh type B (RHBG).